The primary structure comprises 422 residues: Gamma-glutamyl phosphate reductase (422 aa).

The protein belongs to the gamma-glutamyl phosphate reductase family.

The protein localises to the cytoplasm. The catalysed reaction is L-glutamate 5-semialdehyde + phosphate + NADP(+) = L-glutamyl 5-phosphate + NADPH + H(+). The protein operates within amino-acid biosynthesis; L-proline biosynthesis; L-glutamate 5-semialdehyde from L-glutamate: step 2/2. Functionally, catalyzes the NADPH-dependent reduction of L-glutamate 5-phosphate into L-glutamate 5-semialdehyde and phosphate. The product spontaneously undergoes cyclization to form 1-pyrroline-5-carboxylate. In Chloroflexus aggregans (strain MD-66 / DSM 9485), this protein is Gamma-glutamyl phosphate reductase.